Consider the following 970-residue polypeptide: Serine/threonine-protein kinase PLK4 (970 aa).

Residues 12–265 (FKVGNLLGKG…LSSVLDHPFM (254 aa)) form the Protein kinase domain. ATP is bound by residues 18-26 (LGKGSFAGV) and K41. K45 and K46 each carry N6-acetyllysine. The active-site Proton acceptor is D136. Positions 324-373 (VFPKNKSSSDFSSSGDGNSFYTQWGNQETSNSGRGRVIQDAEERPHSRYL) are disordered. A compositionally biased stretch (low complexity) spans 327-343 (KNKSSSDFSSSGDGNSF). Over residues 344 to 356 (YTQWGNQETSNSG) the composition is skewed to polar residues. A compositionally biased stretch (basic and acidic residues) spans 360–369 (VIQDAEERPH). S401 carries the phosphoserine modification. The segment at 498 to 540 (ISPTRDFQGHPDLQKDTSKNAWTDTKVKKNSDASDNAHSVKQP) is disordered. A compositionally biased stretch (basic and acidic residues) spans 504 to 515 (FQGHPDLQKDTS). Positions 530–540 (ASDNAHSVKQP) are enriched in polar residues. Positions 586–699 (TLRSITSPLV…SRFVQLVRSK (114 aa)) constitute a Cryptic POLO box 1 (CPB1) domain. S665 bears the Phosphoserine mark. The Cryptic POLO box 2 (CPB2) domain maps to 700–813 (SPKITYFTRY…GRKPGSTSSP (114 aa)). Residues 808–829 (GSTSSPKALSPPPSVDSNYPTR) are disordered. S817 bears the Phosphoserine mark. The POLO box domain maps to 886–964 (QLLKSVFVKN…LSSILLMFSN (79 aa)).

Belongs to the protein kinase superfamily. Ser/Thr protein kinase family. CDC5/Polo subfamily. In terms of assembly, homodimer. Interacts with CEP152 (via N-terminus). Interacts with CEP78; this interaction may be important for proper PLK4 localization to the centriole and PLK4-induced overduplication of centrioles. Interacts with CEP131. Interacts simultaneously with TENT5C and CEP192. Interacts with TENT5C; this interaction leads to the TENT5C recruitment in the centrosome. Interacts with CEP85; this interaction may be important in cell migration and centriole assembly. In terms of processing, ubiquitinated; leading to its degradation by the proteasome. Deubiquitinated by USP54; leading to PLK4 stabilization. Post-translationally, tyrosine-phosphorylated by TEC. Acetylation by KAT2A and KAT2B impairs kinase activity by shifting the kinase to an inactive conformation.

It is found in the cytoplasm. It localises to the cytoskeleton. Its subcellular location is the microtubule organizing center. The protein localises to the centrosome. The protein resides in the centriole. It is found in the nucleus. It localises to the nucleolus. Its subcellular location is the cleavage furrow. The enzyme catalyses L-seryl-[protein] + ATP = O-phospho-L-seryl-[protein] + ADP + H(+). The catalysed reaction is L-threonyl-[protein] + ATP = O-phospho-L-threonyl-[protein] + ADP + H(+). Its function is as follows. Serine/threonine-protein kinase that plays a central role in centriole duplication. Able to trigger procentriole formation on the surface of the parental centriole cylinder, leading to the recruitment of centriole biogenesis proteins such as SASS6, CPAP, CCP110, CEP135 and gamma-tubulin. When overexpressed, it is able to induce centrosome amplification through the simultaneous generation of multiple procentrioles adjoining each parental centriole during S phase. Phosphorylates 'Ser-151' of FBXW5 during the G1/S transition, leading to inhibit FBXW5 ability to ubiquitinate SASS6. Its central role in centriole replication suggests a possible role in tumorigenesis, centrosome aberrations being frequently observed in tumors. Also involved in deuterosome-mediated centriole amplification in multiciliated that can generate more than 100 centrioles. Also involved in trophoblast differentiation by phosphorylating HAND1, leading to disrupt the interaction between HAND1 and MDFIC and activate HAND1. Phosphorylates CDC25C and CHEK2. Required for the recruitment of STIL to the centriole and for STIL-mediated centriole amplification. Phosphorylates CEP131 and PCM1 which is essential for proper organization and integrity of centriolar satellites. The chain is Serine/threonine-protein kinase PLK4 from Pongo abelii (Sumatran orangutan).